A 252-amino-acid chain; its full sequence is Phosphate import ATP-binding protein PstB 1 (252 aa).

In terms of domain architecture, ABC transporter spans 6–247 (LQIRDLSVYY…PKRKETEDYI (242 aa)). Residue 38–45 (GPSGSGKS) coordinates ATP.

Belongs to the ABC transporter superfamily. Phosphate importer (TC 3.A.1.7) family. As to quaternary structure, the complex is composed of two ATP-binding proteins (PstB), two transmembrane proteins (PstC and PstA) and a solute-binding protein (PstS).

The protein localises to the cell membrane. The catalysed reaction is phosphate(out) + ATP + H2O = ADP + 2 phosphate(in) + H(+). Functionally, part of the ABC transporter complex PstSACB involved in phosphate import. Responsible for energy coupling to the transport system. This is Phosphate import ATP-binding protein PstB 1 from Streptococcus pyogenes serotype M6 (strain ATCC BAA-946 / MGAS10394).